We begin with the raw amino-acid sequence, 547 residues long: Cytochrome P450 monooxygenase cpsD (547 aa).

The chain crosses the membrane as a helical span at residues 18 to 38 (LTGAALVVTLITSVIIVAADL). C476 contacts heme. A disordered region spans residues 528 to 547 (RRRDARRTHEALGSKLKPEE). The segment covering 534–547 (RTHEALGSKLKPEE) has biased composition (basic and acidic residues).

Belongs to the cytochrome P450 family. Requires heme as cofactor.

The protein resides in the membrane. It catalyses the reaction campesine B + campesine C + reduced [NADPH--hemoprotein reductase] + O2 = campesine D + oxidized [NADPH--hemoprotein reductase] + 2 H2O + 2 H(+). It carries out the reaction 2 campesine B + reduced [NADPH--hemoprotein reductase] + O2 = campesine F + oxidized [NADPH--hemoprotein reductase] + 2 H2O + H(+). The catalysed reaction is campesine C + campesine A + reduced [NADPH--hemoprotein reductase] + O2 = campesine E + oxidized [NADPH--hemoprotein reductase] + 2 H2O + 2 H(+). It functions in the pathway alkaloid biosynthesis. Functionally, cytochrome P450 monooxygenase; part of the gene cluster that mediates the biosynthesis of campesine G, a dimeric indole piperazine alkaloid that shows good insecticidal activity Galleria mellonella. Within the pathway, cpsD acts as a dimerase that simultaneously catalyzes one C-C bond (C3-C3') and two C-N bonds (C2-N16' and C2'-N16) coupling reactions between campesines B and C to produce a heterodimer with unexpected 6/5/6/6/6/6/5/6 eight-ring scaffold called campesine D. CpsD is also able to catalyze oxidative heterocoupling od campesines A with B to produce campesine F and campesines A with C to produce campesine E. The non-canonical non-ribosomal peptide synthetase cpsA catalyzes the first steps of the pathway by producing L-tryptophanal and L-valinal from their respective amino-acids. These products condensate spontaneously to form trypyl-valyl pyrazine also known as didehydrocampesine A. The NmrA-like family domain-containing oxidoreductase cpsB is the next enzyme in cps pathway and reduces the unstable didehydrocampesine A to campesine A. The methyltransferase cpsF and the acetyltransferase cpsE both recognize N13 of piperazine ring to carry out methylation and acetylation of campesine A to produce campesine C and B, respectively. The cytochrome P450 monooxygenase cpsD then acts as a dimerase that catalyzes oxidative heterocoupling between campesine B and C to produce heterodimers with unexpected 6/5/6/6/6/6/5/6 eight-ring scaffold called campesine D. Finally,the cytochrome P450 monooxygenase cpsC is a regioselective dehydrogenase that catalyzes dehydrogenation reaction towards C2-N1 to produce campesine G. The sequence is that of Cytochrome P450 monooxygenase cpsD from Aspergillus campestris (strain IBT 28561).